The chain runs to 344 residues: Transcription factor JunB (344 aa).

Glycyl lysine isopeptide (Lys-Gly) (interchain with G-Cter in SUMO2) cross-links involve residues Lys-4, Lys-33, and Lys-36. Positions Lys-51 to Ala-65 are enriched in gly residues. The tract at residues Lys-51 to Asp-75 is disordered. Lys-81 participates in a covalent cross-link: Glycyl lysine isopeptide (Lys-Gly) (interchain with G-Cter in SUMO2). Phosphothreonine occurs at positions 102 and 104. Ser-117 is modified (phosphoserine). Lys-138 participates in a covalent cross-link: Glycyl lysine isopeptide (Lys-Gly) (interchain with G-Cter in SUMO2). Disordered regions lie at residues Asn-181 to Gly-202 and Lys-237 to Pro-257. Residues Ser-183–Ser-192 show a composition bias toward low complexity. Lys-237 carries the post-translational modification N6-acetyllysine; alternate. Lys-237 participates in a covalent cross-link: Glycyl lysine isopeptide (Lys-Gly) (interchain with G-Cter in SUMO1); alternate. Residue Lys-237 forms a Glycyl lysine isopeptide (Lys-Gly) (interchain with G-Cter in SUMO2); alternate linkage. Basic and acidic residues predominate over residues Lys-237–Asp-250. A Phosphoserine modification is found at Ser-248. Position 252 is a phosphothreonine (Thr-252). A Phosphoserine modification is found at Ser-256. The tract at residues Arg-265 to Arg-292 is basic motif. The bZIP domain occupies Arg-265–His-328. The tract at residues Leu-293 to Leu-321 is leucine-zipper. Lys-340 participates in a covalent cross-link: Glycyl lysine isopeptide (Lys-Gly) (interchain with G-Cter in SUMO2).

It belongs to the bZIP family. Jun subfamily. In terms of assembly, binds DNA as a homodimer or as a heterodimer with another member of the Jun/Fos family. Component of an AP-1 transcription factor complex composed of JUN-FOS heterodimers. As part of the AP-1 transcription factor complex, forms heterodimers with FOSB, thereby binding to the AP-1 consensus sequence and stimulating transcription. Interacts with NFE2 (via its WW domains). Post-translationally, ubiquitinated by ITCH, leading to its degradation.

It is found in the nucleus. Functionally, transcription factor involved in regulating gene activity following the primary growth factor response. Binds to the DNA sequence 5'-TGA[GC]TCA-3'. Heterodimerizes with proteins of the FOS family to form an AP-1 transcription complex, thereby enhancing its DNA binding activity to an AP-1 consensus sequence 5'-TGA[GC]TCA-3' and enhancing its transcriptional activity. The protein is Transcription factor JunB (Junb) of Mus musculus (Mouse).